Here is a 334-residue protein sequence, read N- to C-terminus: Fructose-1,6-bisphosphatase class 1 (334 aa).

Mg(2+) is bound by residues Glu90, Asp113, Leu115, and Asp116. Substrate-binding positions include 116 to 119 (DGSS), Asn209, Tyr242, and Lys272. Position 278 (Glu278) interacts with Mg(2+).

Belongs to the FBPase class 1 family. Homotetramer. The cofactor is Mg(2+).

It localises to the cytoplasm. It carries out the reaction beta-D-fructose 1,6-bisphosphate + H2O = beta-D-fructose 6-phosphate + phosphate. It functions in the pathway carbohydrate biosynthesis; gluconeogenesis. In Actinobacillus pleuropneumoniae serotype 5b (strain L20), this protein is Fructose-1,6-bisphosphatase class 1.